We begin with the raw amino-acid sequence, 220 residues long: Miraculin (220 aa).

The signal sequence occupies residues 1–29 (MKELTMLSLSFFFVSALLAAAANPLLSAA). A glycan (N-linked (GlcNAc...) asparagine) is linked at asparagine 71. 3 disulfide bridges follow: cysteine 76-cysteine 121, cysteine 177-cysteine 188, and cysteine 181-cysteine 184. Asparagine 215 carries an N-linked (GlcNAc...) asparagine glycan.

This sequence belongs to the protease inhibitor I3 (leguminous Kunitz-type inhibitor) family. As to quaternary structure, homotetramer; dimer of homodimer. In terms of processing, glycosylated; contains as much as 13,9% of sugars (glucosamine, mannose, galactose, xylose, and fucose). As to expression, expressed in fruit pulp after pollination. Not expressed in seeds, stems or leaves.

Functionally, miraculin has the property of modifying a sour taste into a sweet taste. This alteration of taste perception persists for many minutes. This is Miraculin from Synsepalum dulcificum (Miracle fruit).